The primary structure comprises 274 residues: Nitrate import ATP-binding protein NrtD (274 aa).

One can recognise an ABC transporter domain in the interval 17–250 (LHFDCVGKTF…RPREREAVVE (234 aa)). 53–60 (GHSGCGKS) contributes to the ATP binding site.

This sequence belongs to the ABC transporter superfamily. Nitrate/nitrite/cyanate uptake transporter (NitT) (TC 3.A.1.16) family. In terms of assembly, the complex is composed of two ATP-binding proteins (NrtC and NrtD), two transmembrane proteins (NrtB) and a solute-binding protein (NrtA).

The protein localises to the cell inner membrane. It carries out the reaction nitrate(out) + ATP + H2O = nitrate(in) + ADP + phosphate + H(+). Functionally, part of the ABC transporter complex NrtABCD involved in nitrate uptake. The complex is probably also involved in nitrite transport. Probably responsible for energy coupling to the transport system. In Synechococcus elongatus (strain ATCC 33912 / PCC 7942 / FACHB-805) (Anacystis nidulans R2), this protein is Nitrate import ATP-binding protein NrtD.